A 621-amino-acid polypeptide reads, in one-letter code: Complex I assembly factor ACAD9, mitochondrial (621 aa).

The N-terminal 37 residues, 1–37, are a transit peptide targeting the mitochondrion; sequence MSGCGLFLRTTAAARACRGLVVSTANRRLLRTSPPVR. An N6-acetyllysine modification is found at Lys41. Lys92 is subject to N6-succinyllysine. Glu426 acts as the Proton acceptor in catalysis. Thr478 carries the post-translational modification Phosphothreonine. Lys521 carries the post-translational modification N6-acetyllysine; alternate. Lys521 bears the N6-succinyllysine; alternate mark.

It belongs to the acyl-CoA dehydrogenase family. Homodimer. Interacts with NDUFAF1 and ECSIT. Part of the mitochondrial complex I assembly/MCIA complex that comprises at least the core subunits TMEM126B, NDUFAF1, ECSIT and ACAD9 and complement subunits such as COA1 and TMEM186. Interacts with TMEM70 and TMEM242. FAD serves as cofactor. As to expression, ubiquitously expressed in most normal human tissues and cancer cell lines with high level of expression in heart, skeletal muscles, brain, kidney and liver. In the cerebellum uniquely expressed in the granular layer (at protein level).

It is found in the mitochondrion inner membrane. The enzyme catalyses eicosanoyl-CoA + oxidized [electron-transfer flavoprotein] + H(+) = (2E)-eicosenoyl-CoA + reduced [electron-transfer flavoprotein]. It catalyses the reaction octadecanoyl-CoA + oxidized [electron-transfer flavoprotein] + H(+) = (2E)-octadecenoyl-CoA + reduced [electron-transfer flavoprotein]. It carries out the reaction oxidized [electron-transfer flavoprotein] + hexadecanoyl-CoA + H(+) = (2E)-hexadecenoyl-CoA + reduced [electron-transfer flavoprotein]. The catalysed reaction is decanoyl-CoA + oxidized [electron-transfer flavoprotein] + H(+) = (2E)-decenoyl-CoA + reduced [electron-transfer flavoprotein]. The enzyme catalyses nonanoyl-CoA + oxidized [electron-transfer flavoprotein] + H(+) = (2E)-nonenoyl-CoA + reduced [electron-transfer flavoprotein]. It catalyses the reaction pentadecanoyl-CoA + oxidized [electron-transfer flavoprotein] + H(+) = (2E)-pentadecenoyl-CoA + reduced [electron-transfer flavoprotein]. It carries out the reaction undecanoyl-CoA + oxidized [electron-transfer flavoprotein] + H(+) = trans-2-undecenoyl-CoA + reduced [electron-transfer flavoprotein]. The catalysed reaction is (9Z)-hexadecenoyl-CoA + oxidized [electron-transfer flavoprotein] + H(+) = (2E,9Z)-hexadecadienoyl-CoA + reduced [electron-transfer flavoprotein]. The enzyme catalyses heptadecanoyl-CoA + oxidized [electron-transfer flavoprotein] + H(+) = trans-2-heptadecenoyl-CoA + reduced [electron-transfer flavoprotein]. It catalyses the reaction (9E)-octadecenoyl-CoA + oxidized [electron-transfer flavoprotein] + H(+) = (2E,9E)-octadecadienoyl-CoA + reduced [electron-transfer flavoprotein]. It carries out the reaction oxidized [electron-transfer flavoprotein] + (9Z)-octadecenoyl-CoA + H(+) = (2E,9Z)-octadecadienoyl-CoA + reduced [electron-transfer flavoprotein]. The catalysed reaction is (9Z,12Z)-octadecadienoyl-CoA + oxidized [electron-transfer flavoprotein] + H(+) = (2E,9Z,12Z)-octadecatrienoyl-CoA + reduced [electron-transfer flavoprotein]. The enzyme catalyses (4Z,7Z,10Z,13Z,16Z,19Z)-docosahexaenoyl-CoA + oxidized [electron-transfer flavoprotein] + H(+) = (2E,4Z,7Z,10Z,13Z,16Z,19Z)-docosaheptaenoyl-CoA + reduced [electron-transfer flavoprotein]. It catalyses the reaction tetradecanoyl-CoA + oxidized [electron-transfer flavoprotein] + H(+) = (2E)-tetradecenoyl-CoA + reduced [electron-transfer flavoprotein]. Its function is as follows. As part of the MCIA complex, primarily participates in the assembly of the mitochondrial complex I and therefore plays a role in oxidative phosphorylation. This moonlighting protein also has a dehydrogenase activity toward a broad range of substrates with greater specificity for long-chain unsaturated acyl-CoAs. However, in vivo, it does not seem to play a primary role in fatty acid oxidation. In addition, the function in complex I assembly is independent of the dehydrogenase activity of the protein. The sequence is that of Complex I assembly factor ACAD9, mitochondrial from Homo sapiens (Human).